Here is a 746-residue protein sequence, read N- to C-terminus: NAD(P)H-quinone oxidoreductase subunit 5, chloroplastic (746 aa).

16 helical membrane-spanning segments follow: residues W9–F29, W40–I60, I89–I109, F125–I145, V147–T167, G185–F205, V221–S241, T258–A278, L280–I300, L327–I347, A354–S374, T396–S416, L425–Y445, I547–P567, F608–Y628, and Y723–F743.

This sequence belongs to the complex I subunit 5 family. In terms of assembly, NDH is composed of at least 16 different subunits, 5 of which are encoded in the nucleus.

It localises to the plastid. It is found in the chloroplast thylakoid membrane. It carries out the reaction a plastoquinone + NADH + (n+1) H(+)(in) = a plastoquinol + NAD(+) + n H(+)(out). It catalyses the reaction a plastoquinone + NADPH + (n+1) H(+)(in) = a plastoquinol + NADP(+) + n H(+)(out). Functionally, NDH shuttles electrons from NAD(P)H:plastoquinone, via FMN and iron-sulfur (Fe-S) centers, to quinones in the photosynthetic chain and possibly in a chloroplast respiratory chain. The immediate electron acceptor for the enzyme in this species is believed to be plastoquinone. Couples the redox reaction to proton translocation, and thus conserves the redox energy in a proton gradient. This chain is NAD(P)H-quinone oxidoreductase subunit 5, chloroplastic (ndhF), found in Arabidopsis thaliana (Mouse-ear cress).